A 503-amino-acid chain; its full sequence is Zinc-regulated transporter 3 (503 aa).

3 consecutive transmembrane segments (helical) span residues 8–28, 42–62, and 75–95; these read LLFS…VPLL, LVNY…LYML, and FPGL…VHAF. The disordered stretch occupies residues 112–171; that stretch reads GSHIHSKSHSHSHSHSHADSHSNFSNDHDLENAPSEHGYATSSSSVSENDPLITKDSDRP. Positions 115 to 126 are enriched in basic residues; the sequence is IHSKSHSHSHSH. A compositionally biased stretch (basic and acidic residues) spans 127–142; it reads SHADSHSNFSNDHDLE. Phosphoserine is present on residues Ser-178 and Ser-188. 2 disordered regions span residues 221–244 and 274–295; these read QSER…DKDH and HHSS…FSSP. Positions 280–295 are enriched in polar residues; sequence PENYGSNQLSHSFSSP. Helical transmembrane passes span 336 to 356, 371 to 391, 398 to 418, 438 to 458, and 482 to 502; these read IGMQ…FIIF, IFLS…LPFY, WVAI…GALI, LLSV…QTGI, and GTTC…SALF.

Belongs to the ZIP transporter (TC 2.A.5) family.

It is found in the vacuole membrane. Its function is as follows. Transports zinc from storage in the vacuole to the cytoplasm. This is Zinc-regulated transporter 3 (ZRT3) from Saccharomyces cerevisiae (strain ATCC 204508 / S288c) (Baker's yeast).